Reading from the N-terminus, the 304-residue chain is Putative S-adenosyl-L-methionine-dependent methyltransferase MMAR_1057 (304 aa).

Residues Asp-130 and 159–160 (DL) contribute to the S-adenosyl-L-methionine site.

This sequence belongs to the UPF0677 family.

Its function is as follows. Exhibits S-adenosyl-L-methionine-dependent methyltransferase activity. The polypeptide is Putative S-adenosyl-L-methionine-dependent methyltransferase MMAR_1057 (Mycobacterium marinum (strain ATCC BAA-535 / M)).